The following is a 121-amino-acid chain: Amelogenin (121 aa).

Disordered stretches follow at residues 1-20 (LHHQ…HALQ) and 32-121 (QPMQ…WPAT). A compositionally biased stretch (polar residues) spans 48 to 58 (SVTPTQHHQSN). A compositionally biased stretch (low complexity) spans 59–71 (LPQPAQQPFQPQV). Residues 85–111 (PAHPMPPMPQPPLPPMFPMQPLPPLLP) are compositionally biased toward pro residues.

It belongs to the amelogenin family.

The protein resides in the secreted. Its subcellular location is the extracellular space. The protein localises to the extracellular matrix. Its function is as follows. Plays a role in the biomineralization of teeth. Seems to regulate the formation of crystallites during the secretory stage of tooth enamel development. Thought to play a major role in the structural organization and mineralization of developing enamel. This chain is Amelogenin (AMEL), found in Ornithorhynchus anatinus (Duckbill platypus).